The following is a 193-amino-acid chain: Ion-translocating oxidoreductase complex subunit A (193 aa).

The next 6 helical transmembrane spans lie at Leu-5 to Leu-25, Ile-39 to Ile-59, Ile-63 to Val-83, Val-102 to Leu-122, Ile-134 to Met-154, and Ser-171 to Val-191.

The protein belongs to the NqrDE/RnfAE family. In terms of assembly, the complex is composed of six subunits: RnfA, RnfB, RnfC, RnfD, RnfE and RnfG.

The protein localises to the cell inner membrane. In terms of biological role, part of a membrane-bound complex that couples electron transfer with translocation of ions across the membrane. In Aliivibrio salmonicida (strain LFI1238) (Vibrio salmonicida (strain LFI1238)), this protein is Ion-translocating oxidoreductase complex subunit A.